The sequence spans 44 residues: MRCLPVFVILLLLIASAPSVDDNAKGTQHKRIINWCCLTFYQCC.

Residues 1–19 (MRCLPVFVILLLLIASAPS) form the signal peptide. Residues 20 to 29 (VDDNAKGTQH) constitute a propeptide that is removed on maturation.

This sequence belongs to the conotoxin T superfamily. Post-translationally, contains 2 disulfide bonds that can be either 'C1-C3, C2-C4' or 'C1-C4, C2-C3', since these disulfide connectivities have been observed for conotoxins with cysteine framework V (for examples, see AC P0DQQ7 and AC P81755). As to expression, expressed by the venom duct.

Its subcellular location is the secreted. The sequence is that of Conotoxin Sr5.5 from Conus spurius (Alphabet cone).